The following is a 264-amino-acid chain: Glutamate racemase (264 aa).

Substrate contacts are provided by residues 10 to 11 (DS) and 42 to 43 (YG). The active-site Proton donor/acceptor is cysteine 73. 74-75 (NT) is a substrate binding site. Cysteine 183 serves as the catalytic Proton donor/acceptor. 184–185 (TH) is a substrate binding site.

It belongs to the aspartate/glutamate racemases family.

The enzyme catalyses L-glutamate = D-glutamate. It participates in cell wall biogenesis; peptidoglycan biosynthesis. Functionally, provides the (R)-glutamate required for cell wall biosynthesis. This Streptococcus pyogenes serotype M2 (strain MGAS10270) protein is Glutamate racemase.